Consider the following 496-residue polypeptide: Sugar transporter ERD6 (496 aa).

A run of 6 helical transmembrane segments spans residues 58 to 78 (VFLS…GVGF), 94 to 114 (VAEY…GAVF), 128 to 148 (MLFC…AQNA), 156 to 176 (LLLG…IAEI), 183 to 203 (GSFV…FFII), and 211 to 231 (LLTV…FFIP). A Phosphoserine modification is found at Ser256. The next 6 helical transmembrane spans lie at 292–312 (YPLI…SSGV), 329–349 (IGTS…TVLV), 364–384 (AMGL…FGIL), 394–414 (IGVL…PWII), 430–450 (LVTV…NFML), and 456–476 (GMFL…YFLV).

The protein belongs to the major facilitator superfamily. Sugar transporter (TC 2.A.1.1) family. Expressed in both shoots and roots. In roots, expressed in epidermal cells and especially strongly in cortex cells. In flowers, expressed in sepals.

The protein resides in the membrane. In terms of biological role, sugar transporter. In Arabidopsis thaliana (Mouse-ear cress), this protein is Sugar transporter ERD6 (ERD6).